Consider the following 499-residue polypeptide: Probable inactive receptor-like protein kinase At3g56050 (499 aa).

Positions 1–31 (MSNNWKSVRLRLQNRTLVFLLVILSFGSCYS) are cleaved as a signal peptide. N-linked (GlcNAc...) asparagine glycosylation is present at Asn14. The Extracellular portion of the chain corresponds to 32–146 (LKSQGDGFLE…SKTSSNSTIP (115 aa)). The tract at residues 80–121 (RDRPVARATPPSSSVSTRPDAKRSSTLPPPQKSPPAQHVSAP) is disordered. N-linked (GlcNAc...) asparagine glycosylation occurs at Asn142. The chain crosses the membrane as a helical span at residues 147 to 167 (IVAGCIAGAVFILLLATGVFF). Over 168–499 (FKSKAGKSVN…WAELEVLSTA (332 aa)) the chain is Cytoplasmic. The 267-residue stretch at 208–474 (EDFSNVIGSC…EVTGRLREIT (267 aa)) folds into the Protein kinase domain.

The protein localises to the cell membrane. In Arabidopsis thaliana (Mouse-ear cress), this protein is Probable inactive receptor-like protein kinase At3g56050.